The following is a 465-amino-acid chain: Hydroxyacid-oxoacid transhydrogenase, mitochondrial (465 aa).

It belongs to the iron-containing alcohol dehydrogenase family. Hydroxyacid-oxoacid transhydrogenase subfamily.

Its subcellular location is the mitochondrion. The enzyme catalyses (S)-3-hydroxybutanoate + 2-oxoglutarate = (R)-2-hydroxyglutarate + acetoacetate. The catalysed reaction is 4-hydroxybutanoate + 2-oxoglutarate = (R)-2-hydroxyglutarate + succinate semialdehyde. Catalyzes the cofactor-independent reversible oxidation of gamma-hydroxybutyrate (GHB) to succinic semialdehyde (SSA) coupled to reduction of 2-ketoglutarate (2-KG) to D-2-hydroxyglutarate (D-2-HG). L-3-hydroxybutyrate (L-3-OHB) is also a substrate for HOT when using 2-KG as hydrogen acceptor, resulting in the formation of D-2-HG. The polypeptide is Hydroxyacid-oxoacid transhydrogenase, mitochondrial (Caenorhabditis elegans).